A 791-amino-acid polypeptide reads, in one-letter code: Nuclear cap-binding protein subunit 1-A (791 aa).

Residues 1-24 (MSRRRHSDENDGGQAHKRRKTSEP) are disordered. Residues 28 to 240 (EDRLESLICR…CLWAQIQKLK (213 aa)) form the MIF4G domain. The stretch at 641–714 (LHSTIRKMNK…SEQKNLFLVI (74 aa)) forms a coiled coil. Residues 664–687 (QRLAKQHKHRDSDDNDEDSGRKDG) are disordered.

It belongs to the NCBP1 family. Component of the nuclear cap-binding complex (CBC), a heterodimer composed of ncbp1/cbp80 and ncbp2/cbp20 that interacts with m7GpppG-capped RNA. Component of an alternative nuclear cap-binding complex (CBC) composed of ncbp1/cbp80 and ncbp3.

Its subcellular location is the nucleus. It is found in the cytoplasm. Functionally, component of the cap-binding complex (CBC), which binds cotranscriptionally to the 5'-cap of pre-mRNAs and is involved in various processes such as pre-mRNA splicing, translation regulation, nonsense-mediated mRNA decay, RNA-mediated gene silencing (RNAi) by microRNAs (miRNAs) and mRNA export. The CBC complex is involved in mRNA export from the nucleus, leading to the recruitment of the mRNA export machinery to the 5'-end of mRNA and to mRNA export in a 5' to 3' direction through the nuclear pore. The CBC complex is also involved in mediating U snRNA and intronless mRNAs export from the nucleus. The CBC complex is essential for a pioneer round of mRNA translation, before steady state translation when the CBC complex is replaced by cytoplasmic cap-binding protein eIF4E. The pioneer round of mRNA translation mediated by the CBC complex plays a central role in nonsense-mediated mRNA decay (NMD), NMD only taking place in mRNAs bound to the CBC complex, but not on eIF4E-bound mRNAs. The CBC complex enhances NMD in mRNAs containing at least one exon-junction complex (EJC), promoting the interaction between UPF1 and UPF2. The CBC complex is also involved in 'failsafe' NMD, which is independent of the EJC complex, while it does not participate in Staufen-mediated mRNA decay (SMD). During cell proliferation, the CBC complex is also involved in microRNAs (miRNAs) biogenesis via its interaction with SRRT/ARS2 and is required for miRNA-mediated RNA interference. The CBC complex also acts as a negative regulator of parn, thereby acting as an inhibitor of mRNA deadenylation. In the CBC complex, NCBP1/CBP80 does not bind directly capped RNAs (m7GpppG-capped RNA) but is required to stabilize the movement of the N-terminal loop of NCBP2/CBP20 and lock the CBC into a high affinity cap-binding state with the cap structure. Associates with NCBP3 to form an alternative cap-binding complex (CBC) which plays a key role in mRNA export. The conventional CBC with NCBP2 binds both small nuclear RNA (snRNA) and messenger (mRNA) and is involved in their export from the nucleus whereas the alternative CBC with NCBP3 does not bind snRNA and associates only with mRNA thereby playing a role only in mRNA export. The sequence is that of Nuclear cap-binding protein subunit 1-A (ncbp1-a) from Xenopus laevis (African clawed frog).